A 264-amino-acid polypeptide reads, in one-letter code: Hemin import ATP-binding protein HmuV (264 aa).

An ABC transporter domain is found at 2–242 (IEAVNICVQR…QNLSDAYHCS (241 aa)). 34-41 (GPNGSGKS) contacts ATP.

This sequence belongs to the ABC transporter superfamily. Heme (hemin) importer (TC 3.A.1.14.5) family. The complex is composed of two ATP-binding proteins (HmuV), two transmembrane proteins (HmuU) and a solute-binding protein (HmuT).

It localises to the cell inner membrane. In terms of biological role, part of the ABC transporter complex HmuTUV involved in hemin import. Responsible for energy coupling to the transport system. This is Hemin import ATP-binding protein HmuV from Bartonella quintana (strain Toulouse) (Rochalimaea quintana).